Here is a 916-residue protein sequence, read N- to C-terminus: Protein O-GlcNAcase (916 aa).

Residues methionine 1–glycine 46 are disordered. One can recognise a GH84 domain in the interval phenylalanine 60–methionine 336. Residues glycine 67, lysine 98, and aspartate 174 each coordinate a protein. Aspartate 175 (proton donor) is an active-site residue. A protein-binding positions include tyrosine 219, tryptophan 278–asparagine 280, aspartate 285, and asparagine 313. Residue serine 364 is modified to Phosphoserine. The interval alanine 443–methionine 465 is disordered. The span at threonine 452–aspartate 461 shows a compositional bias: basic and acidic residues.

This sequence belongs to the glycosyl hydrolase 84 family. In terms of assembly, monomer. Interacts with CLOCK. Post-translationally, proteolytically cleaved by caspase-3 during apoptosis. The fragments interact with each other; cleavage does not decrease enzyme activity.

It is found in the cytoplasm. It localises to the nucleus. It carries out the reaction 3-O-(N-acetyl-beta-D-glucosaminyl)-L-seryl-[protein] + H2O = N-acetyl-D-glucosamine + L-seryl-[protein]. The enzyme catalyses 3-O-(N-acetyl-beta-D-glucosaminyl)-L-threonyl-[protein] + H2O = L-threonyl-[protein] + N-acetyl-D-glucosamine. In terms of biological role, cleaves GlcNAc but not GalNAc from O-glycosylated proteins. Deglycosylates a large and diverse number of proteins, such as CRYAB, ELK1, GSDMD, LMNB1 and TAB1. Can use p-nitrophenyl-beta-GlcNAc and 4-methylumbelliferone-GlcNAc as substrates but not p-nitrophenyl-beta-GalNAc or p-nitrophenyl-alpha-GlcNAc (in vitro). Does not bind acetyl-CoA and does not have histone acetyltransferase activity. This is Protein O-GlcNAcase from Mus musculus (Mouse).